We begin with the raw amino-acid sequence, 496 residues long: Amino-acid acetyltransferase, mitochondrial (496 aa).

The region spanning 333 to 493 (YHGTDCLTNG…LDVIDSIQPT (161 aa)) is the N-acetyltransferase domain.

Belongs to the acetyltransferase family.

Its subcellular location is the mitochondrion. The catalysed reaction is L-glutamate + acetyl-CoA = N-acetyl-L-glutamate + CoA + H(+). The protein operates within amino-acid biosynthesis; L-arginine biosynthesis; N(2)-acetyl-L-ornithine from L-glutamate: step 1/4. N-acetylglutamate synthase involved in arginine biosynthesis. This is Amino-acid acetyltransferase, mitochondrial (arg2) from Schizosaccharomyces japonicus (strain yFS275 / FY16936) (Fission yeast).